Consider the following 128-residue polypeptide: Sulfurtransferase TusD (128 aa).

Cys-78 serves as the catalytic Cysteine persulfide intermediate.

It belongs to the DsrE/TusD family. In terms of assembly, heterohexamer, formed by a dimer of trimers. The hexameric TusBCD complex contains 2 copies each of TusB, TusC and TusD. The TusBCD complex interacts with TusE.

It localises to the cytoplasm. Functionally, part of a sulfur-relay system required for 2-thiolation of 5-methylaminomethyl-2-thiouridine (mnm(5)s(2)U) at tRNA wobble positions. Accepts sulfur from TusA and transfers it in turn to TusE. This Escherichia coli O17:K52:H18 (strain UMN026 / ExPEC) protein is Sulfurtransferase TusD.